A 237-amino-acid polypeptide reads, in one-letter code: Heme oxygenase (237 aa).

Histidine 17 contributes to the heme b binding site.

Belongs to the heme oxygenase family.

The protein localises to the plastid. It localises to the chloroplast. The catalysed reaction is heme b + 3 reduced [NADPH--hemoprotein reductase] + 3 O2 = biliverdin IXalpha + CO + Fe(2+) + 3 oxidized [NADPH--hemoprotein reductase] + 3 H2O + H(+). In terms of biological role, catalyzes the opening of the heme ring with the release of iron. Key enzyme in the synthesis of the chromophoric part of the photosynthetic antennae. The chain is Heme oxygenase (pbsA) from Guillardia theta (Cryptophyte).